Consider the following 277-residue polypeptide: Protein RKD3 (277 aa).

Positions 142–226 (KRIIMKRRYR…LGNTKGRTPK (85 aa)) constitute an RWP-RK domain. Residues 201 to 246 (RKLTSLNALIANLKDLLGNTKGRTPKSKLRNALELLEMEKKMIEEV) adopt a coiled-coil conformation.

It is found in the nucleus. In terms of biological role, putative transcription factor. In Arabidopsis thaliana (Mouse-ear cress), this protein is Protein RKD3 (RKD3).